Reading from the N-terminus, the 200-residue chain is 3-isopropylmalate dehydratase small subunit (200 aa).

This sequence belongs to the LeuD family. LeuD type 1 subfamily. As to quaternary structure, heterodimer of LeuC and LeuD.

It carries out the reaction (2R,3S)-3-isopropylmalate = (2S)-2-isopropylmalate. It participates in amino-acid biosynthesis; L-leucine biosynthesis; L-leucine from 3-methyl-2-oxobutanoate: step 2/4. Functionally, catalyzes the isomerization between 2-isopropylmalate and 3-isopropylmalate, via the formation of 2-isopropylmaleate. This chain is 3-isopropylmalate dehydratase small subunit, found in Edwardsiella ictaluri (strain 93-146).